Consider the following 284-residue polypeptide: Tropomyosin Por p 1.0101 (284 aa).

Met-1 carries the post-translational modification N-acetylmethionine. The tract at residues 1 to 21 (MDAIKKKMQAMKLEKDDAMDR) is disordered. Residues 1 to 280 (MDAIKKKMQA…TDELDQAFSE (280 aa)) are a coiled coil. The span at 12 to 21 (KLEKDDAMDR) shows a compositional bias: basic and acidic residues.

It belongs to the tropomyosin family. In terms of assembly, homodimer. In terms of tissue distribution, expressed in muscle (at protein level). Expressed in pincer muscles.

Functionally, tropomyosin, in association with the troponin complex, plays a central role in the calcium dependent regulation of muscle contraction. This Portunus pelagicus (Blue swimmer crab) protein is Tropomyosin Por p 1.0101.